Reading from the N-terminus, the 108-residue chain is UPF0102 protein SO_0299 (108 aa).

Belongs to the UPF0102 family.

In Shewanella oneidensis (strain ATCC 700550 / JCM 31522 / CIP 106686 / LMG 19005 / NCIMB 14063 / MR-1), this protein is UPF0102 protein SO_0299.